The primary structure comprises 317 residues: Mitochondrial outer membrane protein porin 4 (317 aa).

Residues 1-30 (MEAETECKVPGVYSETGIPVEDPAPGLNSD) are disordered.

The protein belongs to the eukaryotic mitochondrial porin (TC 1.B.8.1) family.

Its subcellular location is the mitochondrion outer membrane. Its function is as follows. Forms a channel through the mitochondrial outer membrane that allows diffusion of small hydrophilic molecules. The channel adopts an open conformation at low or zero membrane potential and a closed conformation at potentials above 30-40 mV. The open state has a weak anion selectivity whereas the closed state is cation-selective. This is Mitochondrial outer membrane protein porin 4 (VDAC4) from Oryza sativa subsp. japonica (Rice).